The chain runs to 209 residues: Kynurenine formamidase (209 aa).

Residue W20 participates in substrate binding. Positions 50, 54, and 56 each coordinate Zn(2+). Catalysis depends on H60, which acts as the Proton donor/acceptor. Positions 161 and 173 each coordinate Zn(2+).

This sequence belongs to the Cyclase 1 superfamily. KynB family. Homodimer. The cofactor is Zn(2+).

It catalyses the reaction N-formyl-L-kynurenine + H2O = L-kynurenine + formate + H(+). It functions in the pathway amino-acid degradation; L-tryptophan degradation via kynurenine pathway; L-kynurenine from L-tryptophan: step 2/2. Its function is as follows. Catalyzes the hydrolysis of N-formyl-L-kynurenine to L-kynurenine, the second step in the kynurenine pathway of tryptophan degradation. This Bacillus cereus (strain ZK / E33L) protein is Kynurenine formamidase.